Reading from the N-terminus, the 325-residue chain is Neisseria adhesin A (325 aa).

The first 23 residues, 1 to 23 (MKHFQSKVLTAAILAALSGSAMA), serve as a signal peptide directing secretion. The interval 24–137 (DNPPPSTDEI…NTAAIGENKA (114 aa)) is head domain. Positions 86–135 (LKEVLAQHDQSLADLTGTVDENSEALVKTAEVVNDISADVKANTAAIGEN) form a coiled coil. The interval 139 to 231 (IAKKADQTAL…LASAEKSITE (93 aa)) is coiled stalk domain. Residues 232–270 (HGTRLNGLDRTVSDLRKETRQGLAEQAALSGLFQPYNVG) form an outer membrane translocation of the passenger domain region. 4 beta stranded membrane passes run 270–280 (GRFNVTAAVGG), 284–295 (ESAVAIGTGFRF), 302–308 (KAGVAVG), and 314–325 (SAAYHVGVNYEW). The tract at residues 271–325 (RFNVTAAVGGYKSESAVAIGTGFRFTENFAAKAGVAVGTSSGSSAAYHVGVNYEW) is translocator domain.

Belongs to the autotransporter-2 (AT-2) (TC 1.B.40) family. Homotrimer.

The protein localises to the cell surface. It localises to the cell outer membrane. Its function is as follows. An antigenic bacterial cell surface protein that adheres to and induces bacterial uptake by human epithelial cells. This is Neisseria adhesin A from Neisseria meningitidis serogroup B.